Reading from the N-terminus, the 1036-residue chain is Beta-galactosidase (1036 aa).

Substrate-binding residues include N97 and D197. D197 contributes to the Na(+) binding site. E411, H413, and E456 together coordinate Mg(2+). Substrate-binding positions include E456 and 532-535; that span reads EYAH. The active-site Proton donor is the E456. E532 serves as the catalytic Nucleophile. N592 provides a ligand contact to Mg(2+). 2 residues coordinate Na(+): F596 and D599. Substrate contacts are provided by D599 and W1006.

This sequence belongs to the glycosyl hydrolase 2 family. As to quaternary structure, homotetramer. Requires Mg(2+) as cofactor. The cofactor is Na(+).

The catalysed reaction is Hydrolysis of terminal non-reducing beta-D-galactose residues in beta-D-galactosides.. The chain is Beta-galactosidase from Leuconostoc mesenteroides subsp. mesenteroides (strain ATCC 8293 / DSM 20343 / BCRC 11652 / CCM 1803 / JCM 6124 / NCDO 523 / NBRC 100496 / NCIMB 8023 / NCTC 12954 / NRRL B-1118 / 37Y).